Reading from the N-terminus, the 360-residue chain is MPPIPSRARVYAEVNPSRPREYWDYEAHMIEWGQIDDYQLVRKLGRGKYSEVFEGFKMSTDEKVVVKILKPVKKKKIKREIKILENLRGGTNIITLLDVVKDPISRTPALIFEHVNNSDFKQLYQTLSDYDIRYYLYELLKALDFCHSQGIMHRDVKPHNVMIDAEKRELRLIDWGLAEFYHPRQDYNVRVASRYFKGPELLVDYQCYDYSLDMWSLGCMLASMIFRKEPFFHGHDNYDQLVRIAKVLGTDELYEYIARYHIDLDPRFNDILGRHSRKRWERFIHAENQHLVTPEALDFLDKLLRYDHAERLTAQEAMGHEYFRPVVEAHARANGTEQADGQGASNSASSQSSDAKIDGA.

The Protein kinase domain maps to 38–323 (YQLVRKLGRG…AQEAMGHEYF (286 aa)). ATP is bound by residues 44 to 52 (LGRGKYSEV) and lysine 67. Aspartate 155 (proton acceptor) is an active-site residue. The segment at 334-360 (NGTEQADGQGASNSASSQSSDAKIDGA) is disordered. Over residues 338-354 (QADGQGASNSASSQSSD) the composition is skewed to low complexity.

Belongs to the protein kinase superfamily. Ser/Thr protein kinase family. CK2 subfamily. In terms of assembly, tetramer of two alpha and two beta chains. As to expression, expressed in a subset of the adult male sensory neurons: CEM head neurons, ray RnB neurons, and hook HOB tail neurons.

The protein localises to the cell projection. Its subcellular location is the axon. It localises to the cilium. It is found in the dendrite. The protein resides in the perikaryon. It carries out the reaction L-seryl-[protein] + ATP = O-phospho-L-seryl-[protein] + ADP + H(+). The enzyme catalyses L-threonyl-[protein] + ATP = O-phospho-L-threonyl-[protein] + ADP + H(+). Casein kinases are operationally defined by their preferential utilization of acidic proteins such as caseins as substrates. The alpha chain contains the catalytic site. May participate in Wnt signaling. Modulates two aspects of male mating behavior; response to hermaphrodite contact and vulval location, acting in the same pathway as lov-1 and pkd-2. The protein is Casein kinase II subunit alpha (kin-3) of Caenorhabditis elegans.